The sequence spans 234 residues: Inner membrane protein YbhL (234 aa).

Over 1 to 23 (MDRFPRSDSIVQPRAGLQTYMAQ) the chain is Periplasmic. A helical transmembrane segment spans residues 24–44 (VYGWMTVGLLLTAFVAWYAAN). Over 45–56 (SAAVMELLFTNR) the chain is Cytoplasmic. Residues 57-77 (VFLIGLIIAQLALVIVLSAMI) form a helical membrane-spanning segment. Residues 78 to 79 (QK) are Periplasmic-facing. A helical transmembrane segment spans residues 80–100 (LSAGVTTMLFMLYSALTGLTL). Residues 101-102 (SS) lie on the Cytoplasmic side of the membrane. The helical transmembrane segment at 103–123 (IFIVYTAASIASTFVVTAGMF) threads the bilayer. The Periplasmic segment spans residues 124 to 136 (GAMSLYGYTTKRD). Residues 137-157 (LSGFGNMLFMALIGIVLASLV) traverse the membrane as a helical segment. At 158-163 (NFWLKS) the chain is on the cytoplasmic side. The helical transmembrane segment at 164 to 184 (EALMWAVTYIGVIVFVGLTAY) threads the bilayer. Over 185-206 (DTQKLKNMGEQIDTRDTSNLRK) the chain is Periplasmic. Residues 207–227 (YSILGALTLYLDFINLFLMLL) form a helical membrane-spanning segment. Residues 228 to 234 (RIFGNRR) lie on the Cytoplasmic side of the membrane.

It belongs to the BI1 family.

The protein resides in the cell inner membrane. This chain is Inner membrane protein YbhL (ybhL), found in Escherichia coli (strain K12).